The primary structure comprises 256 residues: MRYQASPALVKAPRALLCIHGAGCSPAIFRVQLSKLRAALRENFEFVYVTAPFPSSAGPGILPVFADLGPYYSWFESSSDNNHNGPSVSERLAAVHDPIRRTIVDWQTQHPHIPIVGAIGFSEGALVTTLLLWQQQMGHLPWLPRMSVALLICPWYQDEASQYMRNEVMKNHDDDNDSKDTEWQEELVIRIPTLHLQGRDDFALAGSKMLVARHFSPREAQVLEFAGQHQFPNRPRDVLEVINRFRKLCVTAQTLE.

Catalysis depends on charge relay system residues Ser122, Asp201, and His229.

This sequence belongs to the LovG family.

The enzyme catalyses dihydromonacolin L-[lovastatin nonaketide synthase] + H2O = holo-[lovastatin nonaketide synthase] + dihydromonacolin L carboxylate + H(+). It participates in polyketide biosynthesis; lovastatin biosynthesis. Functionally, esterase; part of the gene cluster that mediates the biosynthesis of lovastatin (also known as mevinolin, mevacor or monacolin K), a hypolipidemic inhibitor of (3S)-hydroxymethylglutaryl-coenzyme A (HMG-CoA) reductase (HMGR). The first step in the biosynthesis of lovastatin is the production of dihydromonacolin L acid by the lovastatin nonaketide synthase lovB and the trans-acting enoyl reductase lovC via condensation of one acetyl-CoA unit and 8 malonyl-CoA units. Dihydromonacolin L acid is released from lovB by the thioesterase lovG. Next, dihydromonacolin L acid is oxidized by the dihydromonacolin L monooxygenase lovA twice to form monacolin J acid. The 2-methylbutyrate moiety of lovastatin is synthesized by the lovastatin diketide synthase lovF via condensation of one acetyl-CoA unit and one malonyl-CoA unit. Finally, the covalent attachment of this moiety to monacolin J acid is catalyzed by the transesterase lovD to yield lovastatin. LovD has broad substrate specificity and can also convert monacolin J to simvastatin using alpha-dimethylbutanoyl-S-methyl-3-mercaptopropionate (DMB-S-MMP) as the thioester acyl donor, and can also catalyze the reverse reaction and function as hydrolase in vitro. LovD has much higher activity with LovF-bound 2-methylbutanoate than with free diketide substrates. Its function is as follows. Esterase that catalyzes the release of covalently bound dihydromonacolin L from LovB during lovastatin biosynthesis. In Aspergillus terreus, this protein is Dihydromonacolin L-[lovastatin nonaketide synthase] thioesterase.